The chain runs to 325 residues: MKMNKLVKSSVATSMALLLLSGTANAEGKITPVSVKKVDDKVTLYKTTATADSDKFKISQILTFNFIKDKSYDKDTLVLKATGNINSGFVKPNPNDYDFSKLYWGAKYNVSISSQSNDSVNVVDYAPKNQNEEFQVQNTLGYTFGGDISISNGLSGGLNGNTAFSETINYKQESYRTTLSRNTNYKNVGWGVEAHKIMNNGWGPYGRDSFHPTYGNELFLAGRQSSAYAGQNFIAQHQMPLLSRSNFNPEFLSVLSHRQDGAKKSKITVTYQREMDLYQIRWNGFYWAGANYKNFKTRTFKSTYEIDWENHKVKLLDTKETENNK.

The N-terminal stretch at 1 to 26 (MKMNKLVKSSVATSMALLLLSGTANA) is a signal peptide.

The protein belongs to the aerolysin family. Toxicity requires sequential binding and synergistic association of a class S and a class F component which form heterooligomeric complexes. HlgB (class F) associates with either hlgA thus forming an AB toxin or with hlgC thus forming a CB toxin. Interacts with host AMFR.

Its subcellular location is the secreted. Its function is as follows. Toxin that seems to act by forming pores in the membrane of the cell. Has a hemolytic and a leucotoxic activity. Promotes host AMFR-mediated inflammation by mediating 'Lys-27'-linked ubiquitination of TAB3, TAK1-TAB3 complex formation and phosphorylation of TAK1/MAP3K7. In turn, activates host NF-kappa-B signaling pathway. This chain is Gamma-hemolysin component B (hlgB), found in Staphylococcus aureus (strain NCTC 8325 / PS 47).